The following is a 561-amino-acid chain: Putative transport protein Ent638_1362 (561 aa).

Helical transmembrane passes span 8–28 (LLNGNYILLLFVVLALGLCLG), 32–52 (LGSVQLGNSIGVLVVSLLLGQ), 66–86 (FMLFIFCVGVEAGPNFFSIFF), 94–114 (MLALVMVGSALIIALGLGKLF), and 158–178 (HLSLGYALTYLIGLVSLIVAA). 2 consecutive RCK C-terminal domains span residues 202–288 (LDTD…SFRN) and 292–373 (VFDR…RIGF). 5 helical membrane-spanning segments follow: residues 383 to 403 (LLAFCAFFIVGLMIGMITFQF), 406 to 426 (FSFGVGNAAGLLFAGIMLGFL), 447 to 467 (FGLMVFMAGVGLSAGSGIGHS), 475 to 495 (MLVAGLIVSLLPVVICFLFGA), and 540 to 560 (AIANVLLTLAGTLIIIIWPGL).

This sequence belongs to the AAE transporter (TC 2.A.81) family. YbjL subfamily.

Its subcellular location is the cell membrane. This is Putative transport protein Ent638_1362 from Enterobacter sp. (strain 638).